The chain runs to 371 residues: Surface protein P12p (371 aa).

The N-terminal stretch at 1–20 (MHIVSFIIFFFALFFPISIC) is a signal peptide. 6-Cys domains follow at residues 23-168 (INGV…LKKN) and 169-343 (ILYG…FSNQ). Disulfide bonds link Cys-27–Cys-62, Cys-76–Cys-144, Cys-93–Cys-142, and Cys-173–Cys-245. An N-linked (GlcNAc...) asparagine glycan is attached at Asn-184. A disordered region spans residues 202–239 (GNNNNDDDNNDDDNNNDNNNNDNNNNNNNNNNNNNNNN). Residues 206–216 (NDDDNNDDDNN) are compositionally biased toward acidic residues. Residues 217–239 (NDNNNNDNNNNNNNNNNNNNNNN) are compositionally biased toward low complexity. Residues Asn-242 and Asn-246 are each glycosylated (N-linked (GlcNAc...) asparagine). 2 disulfide bridges follow: Cys-260–Cys-323 and Cys-271–Cys-321.

It localises to the cell surface. The protein resides in the cell membrane. This chain is Surface protein P12p (PFS12P), found in Plasmodium falciparum (isolate 3D7).